A 376-amino-acid chain; its full sequence is N-acetyldiaminopimelate deacetylase (376 aa).

Asp69 is a catalytic residue. Glu128 functions as the Proton acceptor in the catalytic mechanism.

It belongs to the peptidase M20A family. N-acetyldiaminopimelate deacetylase subfamily.

It carries out the reaction N-acetyl-(2S,6S)-2,6-diaminopimelate + H2O = (2S,6S)-2,6-diaminopimelate + acetate. Its pathway is amino-acid biosynthesis; L-lysine biosynthesis via DAP pathway; LL-2,6-diaminopimelate from (S)-tetrahydrodipicolinate (acetylase route): step 3/3. Functionally, catalyzes the conversion of N-acetyl-diaminopimelate to diaminopimelate and acetate. The sequence is that of N-acetyldiaminopimelate deacetylase from Streptococcus pneumoniae (strain CGSP14).